Reading from the N-terminus, the 465-residue chain is Cysteine--tRNA ligase (465 aa).

Zn(2+) is bound at residue cysteine 27. The 'HIGH' region motif lies at 29–39 (PTVYDFIHIGN). Zn(2+) contacts are provided by cysteine 207, histidine 232, and glutamate 236. The 'KMSKS' region motif lies at 264–268 (KMSKS). Residue lysine 267 coordinates ATP.

The protein belongs to the class-I aminoacyl-tRNA synthetase family. As to quaternary structure, monomer. Zn(2+) is required as a cofactor.

It localises to the cytoplasm. It catalyses the reaction tRNA(Cys) + L-cysteine + ATP = L-cysteinyl-tRNA(Cys) + AMP + diphosphate. In Caldicellulosiruptor saccharolyticus (strain ATCC 43494 / DSM 8903 / Tp8T 6331), this protein is Cysteine--tRNA ligase.